Consider the following 188-residue polypeptide: Trafficking protein particle complex subunit 5 (188 aa).

Belongs to the TRAPP small subunits family. BET3 subfamily. As to quaternary structure, part of the multisubunit TRAPP (transport protein particle) complex.

The protein resides in the golgi apparatus. The protein localises to the cis-Golgi network. It localises to the endoplasmic reticulum. Its function is as follows. May play a role in vesicular transport from endoplasmic reticulum to Golgi. The sequence is that of Trafficking protein particle complex subunit 5 (TRAPPC5) from Gallus gallus (Chicken).